The sequence spans 366 residues: MRKRISAIIMTLFMVLASCSNQLEAEKLAAESKNTFFDSLVKIGQGFQDIFGILEMQLGDALGFNAVKSGDKKSKVGEHFKKIGDGLTTTKDKLKELSNKISEAKNANSSTIEAVKSAINSASDVFEQLITALTKLADTAKEAGDTNIGDNADAVPGAAEKTGVEAIIAGVKDIIGAAEKSGVKIEYGNAGDPIATAANTTDALAVLGGNTAKATQGAGDKLAFEVSKADPWAIIDKIKNAKAADGIQLDAGEKDAGTLAASNNNASANAGAESNAASSSSWLFLMQLSKGGKFSAAVADAGAVKAAAVSAVNKVLGVLDFIIRKTVSSNLDKIREAVKGIKYSEITETDATESGDAQPITNKSSN.

The N-terminal stretch at 1-18 (MRKRISAIIMTLFMVLAS) is a signal peptide. Cys19 is lipidated: N-palmitoyl cysteine. Cys19 carries S-diacylglycerol cysteine lipidation.

The protein belongs to the variable large protein (Vlp) family. Beta subfamily.

It is found in the cell outer membrane. Its function is as follows. The Vlp and Vsp proteins are antigenically distinct proteins, only one vlp or vsp gene is transcriptionally active at any one time. Switching between these genes is a mechanism of host immune response evasion. The protein is Variable large protein 10 of Borrelia hermsii.